We begin with the raw amino-acid sequence, 341 residues long: MVTDQGDRASEADGGPVRHIPVMLAEVLAALEPAPGKVILDGTFGAGGYTSAILDAGADVIALDRDPTAIAAGQPMVAAAGGRLRLIHSRFSELADHVPEGGLDGIVFDIGVSSMQIDEAERGFSFQKKGPLDMRMSAAGVSAADVVNRAKVSDLIRIFGFLGEEKQAGRIARAIEKRRAEAPFETTRNLANLIETVTPRKAKDKIHPATRVFQALRIFVNDELGELANALFAAERVLKPGGRLVVVTFHSLEDRIVKTFFQDRSGKAGGSRHLPLVTARDATFTPVGKPMVAASEDEASRNPRARSAKLRAGVRTPAASPGNDLSIFNLPELASLARLGG.

S-adenosyl-L-methionine-binding positions include 47–49 (GGY), aspartate 64, phenylalanine 91, aspartate 109, and glutamine 116. The disordered stretch occupies residues 292 to 318 (VAASEDEASRNPRARSAKLRAGVRTPA).

This sequence belongs to the methyltransferase superfamily. RsmH family.

It localises to the cytoplasm. The enzyme catalyses cytidine(1402) in 16S rRNA + S-adenosyl-L-methionine = N(4)-methylcytidine(1402) in 16S rRNA + S-adenosyl-L-homocysteine + H(+). Its function is as follows. Specifically methylates the N4 position of cytidine in position 1402 (C1402) of 16S rRNA. This chain is Ribosomal RNA small subunit methyltransferase H, found in Sinorhizobium fredii (strain NBRC 101917 / NGR234).